A 69-amino-acid chain; its full sequence is uncharacterized protein (69 aa).

Disordered stretches follow at residues 1-32 (MSAP…GWGD) and 44-69 (QSDA…APSD). Composition is skewed to basic and acidic residues over residues 7–32 (NLDR…GWGD) and 46–69 (DADK…APSD).

This is an uncharacterized protein from Schizosaccharomyces pombe (strain 972 / ATCC 24843) (Fission yeast).